We begin with the raw amino-acid sequence, 212 residues long: Protein-L-isoaspartate O-methyltransferase (212 aa).

Ser-60 is an active-site residue.

Belongs to the methyltransferase superfamily. L-isoaspartyl/D-aspartyl protein methyltransferase family.

It localises to the cytoplasm. The enzyme catalyses [protein]-L-isoaspartate + S-adenosyl-L-methionine = [protein]-L-isoaspartate alpha-methyl ester + S-adenosyl-L-homocysteine. Functionally, catalyzes the methyl esterification of L-isoaspartyl residues in peptides and proteins that result from spontaneous decomposition of normal L-aspartyl and L-asparaginyl residues. It plays a role in the repair and/or degradation of damaged proteins. The polypeptide is Protein-L-isoaspartate O-methyltransferase (Methanococcus maripaludis (strain C6 / ATCC BAA-1332)).